The chain runs to 238 residues: uncharacterized protein (238 aa).

This is an uncharacterized protein from Rickettsia prowazekii (strain Madrid E).